The primary structure comprises 358 residues: Protein ocs (358 aa).

Belongs to the lysopine/nopaline/octopine/opine/vitopine dehydrogenases family.

The enzyme catalyses D-octopine + NAD(+) + H2O = L-arginine + pyruvate + NADH + H(+). It carries out the reaction D-lysopine + NADP(+) + H2O = L-lysine + pyruvate + NADPH + H(+). Its function is as follows. Reductive condensation of pyruvate and arginine, lysine, histidine, or octopine to form octopine, lysopine, histopine, or octopinic acid, respectively. NADPH is the preferred cofactor, but NADH can also be used. The polypeptide is Protein ocs (ocs) (Agrobacterium vitis (Rhizobium vitis)).